A 59-amino-acid polypeptide reads, in one-letter code: Large ribosomal subunit protein bL32 (59 aa).

Residues 1–20 are disordered; that stretch reads MAVQKNKPTRSKRGMRRSHD. A compositionally biased stretch (basic residues) spans 7–19; that stretch reads KPTRSKRGMRRSH.

It belongs to the bacterial ribosomal protein bL32 family.

This chain is Large ribosomal subunit protein bL32, found in Wigglesworthia glossinidia brevipalpis.